A 246-amino-acid chain; its full sequence is Bis(5'-nucleosyl)-tetraphosphatase PrpE [asymmetrical] (246 aa).

This sequence belongs to the PrpE family. Requires Ni(2+) as cofactor.

It carries out the reaction P(1),P(4)-bis(5'-guanosyl) tetraphosphate + H2O = GMP + GTP + 2 H(+). In terms of biological role, asymmetrically hydrolyzes Ap4p to yield AMP and ATP. The sequence is that of Bis(5'-nucleosyl)-tetraphosphatase PrpE [asymmetrical] from Bacillus cereus (strain AH187).